The chain runs to 794 residues: Copper amine oxidase-like protein cao2 (794 aa).

Residues 307-318 (AYDLGEYGVGYR) and 391-396 (AANYEY) each bind substrate. D309 (proton acceptor) is an active-site residue. The active-site Schiff-base intermediate with substrate; via topaquinone is the Y394. Y394 is subject to 2',4',5'-topaquinone. Cu cation contacts are provided by H445 and H447. The interval 563–584 (GDYAPQASDDTPKGLSKWISDD) is disordered. The Mn(2+) site is built by D593 and I594. H604 contributes to the Cu cation binding site. Residues 634-748 (ALDTSSSVNS…NGGHHHHHHH (115 aa)) are disordered. A compositionally biased stretch (low complexity) spans 637–649 (TSSSVNSTSEATS). A compositionally biased stretch (basic and acidic residues) spans 652-714 (THHENLRDTS…DAAQKHEGRS (63 aa)). The segment covering 716–727 (TLAQPGQQNANQ) has biased composition (polar residues).

The protein belongs to the copper/topaquinone oxidase family. Homodimer. Cu cation is required as a cofactor. The cofactor is Zn(2+). L-topaquinone serves as cofactor. It depends on Mn(2+) as a cofactor. Post-translationally, topaquinone (TPQ) is generated by copper-dependent autoxidation of a specific tyrosyl residue.

It is found in the cytoplasm. The catalysed reaction is a primary methyl amine + O2 + H2O = an aldehyde + H2O2 + NH4(+). Copper amine oxidase-like protein that does not show any copper amine oxidase activity. May be the appropriate amine substrate for cao2 has not been identified yet. The protein is Copper amine oxidase-like protein cao2 (cao2) of Schizosaccharomyces pombe (strain 972 / ATCC 24843) (Fission yeast).